The chain runs to 1334 residues: Nck-associated protein 5-like (1334 aa).

Disordered stretches follow at residues 1-28 (MSEA…MEPG), 115-146 (LPQI…APLP), 210-234 (TPWR…GPPQ), 266-316 (GEED…SPDT), and 349-711 (PLNG…MVPS). The segment at 1–139 (MSEAMDQPAG…PASPSLSSTE (139 aa)) is mediates interaction with CDK5RAP2 and is required for homodimerization and microtubule bundle formation. The stretch at 28 to 106 (GTCQELLHRL…NQMLSALFQQ (79 aa)) forms a coiled coil. Residues 122 to 132 (PLQPPSEPPAS) are compositionally biased toward pro residues. Over residues 358-372 (GQSSSPDQAPPQLSK) the composition is skewed to polar residues. Residues Ser440, Ser451, Ser470, and Ser477 each carry the phosphoserine; by CDK1 modification. Low complexity predominate over residues 468-481 (SPSPGGPQLSPQLP). A (S/T)X(I/L)P motif 1 motif is present at residues 484–487 (SRIP). Phosphoserine is present on residues Ser493, Ser496, and Ser498. Residues 519-547 (LPTSPSPCYTTPDSTQLRPPQSALSTTLS) are compositionally biased toward polar residues. Ser571 and Ser577 each carry phosphoserine; by CDK1. Positions 638–649 (PGNSSKKPSQGS) are enriched in polar residues. Thr659 carries the post-translational modification Phosphothreonine. Residues 750–1146 (RVYSSHSMGA…SGTPSKNLPK (397 aa)) form a mediates interaction with beta-tubulin and is required for microtubule bundle formation region. At Ser767 the chain carries Phosphoserine; by CDK1. Residues 782–884 (LAGALCPQVP…EGLAPHSAIE (103 aa)) form a disordered region. The segment covering 810–825 (SPHSSPTKLPSKSPTK) has biased composition (low complexity). Positions 816-819 (TKLP) match the (S/T)X(I/L)P motif 2 motif. Residues 926–929 (SKLP) carry the (S/T)X(I/L)P motif 3; required for interaction with MAPRE1 motif. Disordered regions lie at residues 931–953 (LNRR…LRRE), 986–1015 (KAYL…QGQL), and 1030–1183 (LNRV…VPGI). Residues 933–942 (RRTEATKNKE) show a composition bias toward basic and acidic residues. Residues 956–994 (MEARKLEAESLNISKLMAKAEDLRRALEEEKAYLSSRAR) adopt a coiled-coil conformation. Over residues 1033–1050 (VDGKELPSKSWREPKPEY) the composition is skewed to basic and acidic residues. Low complexity predominate over residues 1079–1090 (GCGKPPGKPSSE). Positions 1110–1122 (SHFTACGSLTRTL) are enriched in polar residues. Residues 1152–1167 (LDPPPGVPPARPPPLT) show a composition bias toward pro residues. A Phosphoserine modification is found at Ser1194. Positions 1197-1206 (AFPALLPAAP) are enriched in low complexity. The segment at 1197 to 1334 (AFPALLPAAP…DSLSSCGSQG (138 aa)) is disordered. Over residues 1235–1247 (TFPNTRAAGSSSD) the composition is skewed to polar residues. A compositionally biased stretch (low complexity) spans 1313-1334 (LETSESLSDSLYDSLSSCGSQG).

In terms of assembly, homodimer. Interacts with CDK5RAP2. Interacts with MAPRE1. Interacts with beta-tubulin. In terms of processing, CDK1/Cyclin B-dependent phosphorylation mediates its dissociation from centrosomes during mitosis.

Its subcellular location is the cytoplasm. It localises to the cytoskeleton. The protein localises to the microtubule organizing center. The protein resides in the centrosome. In terms of biological role, regulates microtubule organization and stabilization. Promotes microtubule growth and bundling formation and stabilizes microtubules by increasing intense acetylation of microtubules. Both tubulin-binding and homodimer formation are required for NCKAP5L-mediated microtubule bundle formation. The chain is Nck-associated protein 5-like from Homo sapiens (Human).